The primary structure comprises 152 residues: MEKKLSSENNQLSSEQILGLLPHRYPFALVDKVIEHIPGERAVAIKNVTINEPQFQGHFPERPLMPGVLIVESMAQVGGIIVTQMPDLPKGLFVFAGINNVKFRKPVLPGDQLIISCELLSIKRQRFGKVKGEAHVDGKLVCAGELMFSLVN.

H58 is a catalytic residue.

Belongs to the thioester dehydratase family. FabZ subfamily.

It localises to the cytoplasm. The catalysed reaction is a (3R)-hydroxyacyl-[ACP] = a (2E)-enoyl-[ACP] + H2O. Functionally, involved in unsaturated fatty acids biosynthesis. Catalyzes the dehydration of short chain beta-hydroxyacyl-ACPs and long chain saturated and unsaturated beta-hydroxyacyl-ACPs. The chain is 3-hydroxyacyl-[acyl-carrier-protein] dehydratase FabZ from Prochlorococcus marinus (strain MIT 9215).